The chain runs to 403 residues: Mitochondrial intermembrane space import and assembly protein 40 (403 aa).

Residues 1 to 31 constitute a mitochondrion transit peptide; sequence MLRNLVVRNACRNRPSIQVARGLCRHQTRRL. Residues 33-46 are Mitochondrial matrix-facing; that stretch reads ASSPQFGRNSNQEK. The helical; Signal-anchor for type II membrane protein transmembrane segment at 47–66 threads the bilayer; it reads TAGFIMGILSMAGALYFIAP. The Mitochondrial intermembrane portion of the chain corresponds to 67–403; sequence NRKPLFASRK…KEPLNEESKP (337 aa). Basic and acidic residues-rich tracts occupy residues 75–84, 101–118, 147–168, 206–230, and 262–271; these read RKVESDKTAE, NNSK…KNDE, EDNK…KDDE, SEKK…KTTT, and EELRKQEEKQ. The interval 75 to 292 is disordered; the sequence is RKVESDKTAE…GAYNPDTGEI (218 aa). 3 disulfides stabilise this stretch: Cys296–Cys298, Cys307–Cys340, and Cys317–Cys330. The CHCH domain maps to 304-348; it reads HGPCGEEFKSAFSCFVYSEAEPKGIDCVEKFQHMQDCFRKYPEHY. 2 short sequence motifs (cx9C motif) span residues 307–317 and 330–340; these read CGEEFKSAFSC and CVEKFQHMQDC. A disordered region spans residues 351-403; it reads QLKETSDDEEPQDKVKVNTIESAPNVSSAKENAAKKAEQSDVKKEPLNEESKP. Polar residues predominate over residues 369 to 378; the sequence is TIESAPNVSS. Residues 382–403 show a composition bias toward basic and acidic residues; that stretch reads NAAKKAEQSDVKKEPLNEESKP.

In terms of assembly, monomer. Interacts with the FAD-linked sulfhydryl oxidase ERV1 and with the substrate proteins COX17, TIM9, and TIM13, forming transient intermolecular disulfide bridges. Interacts with FCJ1. Cu(2+) serves as cofactor. It depends on Zn(2+) as a cofactor.

It is found in the mitochondrion inner membrane. Required for the import and folding of small cysteine-containing proteins (small Tim) in the mitochondrial intermembrane space (IMS). Forms a redox cycle with ERV1 that involves a disulfide relay system. Precursor proteins to be imported into the IMS are translocated in their reduced form into the mitochondria. The oxidized form of MIA40 forms a transient intermolecular disulfide bridge with the reduced precursor protein, resulting in oxidation of the precursor protein that now contains an intramolecular disulfide bond and is able to undergo folding in the IMS. Reduced MIA40 is reoxidized by FAD-linked sulfhydryl oxidase ERV1. The chain is Mitochondrial intermembrane space import and assembly protein 40 (MIA40) from Saccharomyces cerevisiae (strain ATCC 204508 / S288c) (Baker's yeast).